The primary structure comprises 408 residues: Arginine biosynthesis bifunctional protein ArgJ (408 aa).

The substrate site is built by threonine 162, lysine 188, threonine 199, glutamate 280, asparagine 403, and serine 408. The active-site Nucleophile is the threonine 199.

Belongs to the ArgJ family. As to quaternary structure, heterotetramer of two alpha and two beta chains.

It is found in the cytoplasm. It carries out the reaction N(2)-acetyl-L-ornithine + L-glutamate = N-acetyl-L-glutamate + L-ornithine. It catalyses the reaction L-glutamate + acetyl-CoA = N-acetyl-L-glutamate + CoA + H(+). It participates in amino-acid biosynthesis; L-arginine biosynthesis; L-ornithine and N-acetyl-L-glutamate from L-glutamate and N(2)-acetyl-L-ornithine (cyclic): step 1/1. The protein operates within amino-acid biosynthesis; L-arginine biosynthesis; N(2)-acetyl-L-ornithine from L-glutamate: step 1/4. Catalyzes two activities which are involved in the cyclic version of arginine biosynthesis: the synthesis of N-acetylglutamate from glutamate and acetyl-CoA as the acetyl donor, and of ornithine by transacetylation between N(2)-acetylornithine and glutamate. The polypeptide is Arginine biosynthesis bifunctional protein ArgJ (Ruegeria pomeroyi (strain ATCC 700808 / DSM 15171 / DSS-3) (Silicibacter pomeroyi)).